The primary structure comprises 260 residues: uncharacterized protein (260 aa).

Residues 1-22 (MKHSKKLLLCISFLLITIFISG) form the signal peptide. A lipid anchor (N-palmitoyl cysteine) is attached at Cys23. Cys23 carries the S-diacylglycerol cysteine lipid modification.

The protein belongs to the staphylococcal tandem lipoprotein family.

Its subcellular location is the cell membrane. This is an uncharacterized protein from Staphylococcus epidermidis (strain ATCC 35984 / DSM 28319 / BCRC 17069 / CCUG 31568 / BM 3577 / RP62A).